Here is a 271-residue protein sequence, read N- to C-terminus: MSETEDVKRPRTESSTSCRNCGKEGHYARECPEADSKGDERSTTCFRCGEEGHMSRECPNEARSGAAGAMTCFRCGEAGHMSRDCPNSAKPGAAKGFECYKCGQEGHLSRDCPSSQGGSRGGYGQKRGRSGAQGGYSGDRTCYKCGDAGHISRDCPNGQGGYSGAGDRTCYKCGDAGHISRDCPNGQGGYSGAGDRKCYKCGESGHMSRECPSAGSTGSGDRACYKCGKPGHISRECPEAGGSYGGSRGGGDRTCYKCGEAGHISRDCPSS.

Basic and acidic residues-rich tracts occupy residues 1–12 (MSETEDVKRPRT) and 21–42 (CGKE…DERS). Residues 1–42 (MSETEDVKRPRTESSTSCRNCGKEGHYARECPEADSKGDERS) are disordered. 4 consecutive CCHC-type zinc fingers follow at residues 16–33 (TSCR…ECPE), 43–60 (TTCF…ECPN), 70–87 (MTCF…DCPN), and 97–114 (FECY…DCPS). The disordered stretch occupies residues 107–136 (HLSRDCPSSQGGSRGGYGQKRGRSGAQGGY). The segment covering 118 to 136 (GSRGGYGQKRGRSGAQGGY) has biased composition (gly residues). CCHC-type zinc fingers lie at residues 140–157 (RTCY…DCPN), 168–185 (RTCY…DCPN), 196–213 (RKCY…ECPS), 222–239 (RACY…ECPE), and 253–270 (RTCY…DCPS).

It localises to the nucleus. Its function is as follows. Binds to single-stranded DNA located in the 5' hexanucleotide repeat region of the L.major leishmanolysin (GP63) gene. This is DNA-binding protein HEXBP (HEXBP) from Leishmania major.